Here is a 93-residue protein sequence, read N- to C-terminus: YcgL domain-containing protein VV1058 (93 aa).

Residues 1-84 (MLCSIYKSSK…PPENLLQQHK (84 aa)) enclose the YcgL domain. The interval 74–93 (PPPENLLQQHKERKAQQKND) is disordered.

The protein is YcgL domain-containing protein VV1058 of Vibrio vulnificus (strain YJ016).